The sequence spans 146 residues: Hemoglobin subunit beta (146 aa).

Residue Val1 is modified to N-acetylvaline. Residues His2–His146 form the Globin domain. Phosphothreonine is present on Thr12. At Ser44 the chain carries Phosphoserine. Lys59 is subject to N6-acetyllysine. His63 is a binding site for heme b. Lys82 carries the N6-acetyllysine modification. Position 92 (His92) interacts with heme b. Cys93 bears the S-nitrosocysteine mark. Lys144 carries the post-translational modification N6-acetyllysine.

This sequence belongs to the globin family. Heterotetramer of two alpha chains and two beta chains. As to expression, red blood cells.

Functionally, involved in oxygen transport from the lung to the various peripheral tissues. The chain is Hemoglobin subunit beta (HBB) from Aotus trivirgatus (Three-striped night monkey).